Here is a 438-residue protein sequence, read N- to C-terminus: Exodeoxyribonuclease 7 large subunit (438 aa).

Residues 405 to 438 (GATSTGPTDDIPSSAARLPSSPAPDARPASGAES) are disordered.

This sequence belongs to the XseA family. In terms of assembly, heterooligomer composed of large and small subunits.

Its subcellular location is the cytoplasm. It catalyses the reaction Exonucleolytic cleavage in either 5'- to 3'- or 3'- to 5'-direction to yield nucleoside 5'-phosphates.. In terms of biological role, bidirectionally degrades single-stranded DNA into large acid-insoluble oligonucleotides, which are then degraded further into small acid-soluble oligonucleotides. This Clavibacter michiganensis subsp. michiganensis (strain NCPPB 382) protein is Exodeoxyribonuclease 7 large subunit.